Consider the following 945-residue polypeptide: Cysteine-rich, acidic integral membrane protein (945 aa).

The interval 1–20 is disordered; it reads MGNEAGPIFEESNAEVGTPP. The first 23 residues, 1 to 23, serve as a signal peptide directing secretion; it reads MGNEAGPIFEESNAEVGTPPADA. Residues 24-882 are Extracellular-facing; the sequence is VHDDFFFDYK…GKGSSVSAGL (859 aa). N-linked (GlcNAc...) asparagine glycans are attached at residues Asn34 and Asn43. 66 consecutive repeat copies span residues 40–51, 52–63, 64–75, 76–87, 88–99, 100–111, 112–123, 124–135, 136–147, 148–159, 160–171, 172–183, 184–195, 196–207, 208–219, 220–231, 232–243, 244–255, 256–267, 268–279, 280–291, 292–303, 304–315, 316–327, 328–339, 340–351, 352–363, 364–375, 376–387, 388–399, 400–411, 412–423, 424–435, 436–447, 448–459, 460–471, 472–483, 484–495, 496–507, 508–519, 520–531, 532–543, 544–555, 556–567, 568–579, 580–591, 592–603, 604–615, 616–627, 628–639, 640–651, 652–663, 664–675, 676–687, 688–699, 700–711, 712–723, 724–735, 736–747, 748–759, 760–771, 772–783, 784–795, 796–807, 808–819, and 820–831. Residues 40-831 are 66 X 12 AA tandem repeats of D-D-C-[ND]-I-T-G-D-G-N-E-T; sequence DDCNITGDCN…CNITGDCNET (792 aa). Residues Asn67, Asn79, Asn91, and Asn103 are each glycosylated (N-linked (GlcNAc...) asparagine). 3 N-linked (GlcNAc...) asparagine glycosylation sites follow: Asn127, Asn139, and Asn151. N-linked (GlcNAc...) asparagine glycosylation occurs at Asn175. N-linked (GlcNAc...) asparagine glycans are attached at residues Asn199, Asn211, Asn223, Asn235, Asn247, and Asn259. N-linked (GlcNAc...) asparagine glycans are attached at residues Asn283, Asn295, Asn307, Asn319, Asn331, and Asn343. 5 N-linked (GlcNAc...) asparagine glycosylation sites follow: Asn367, Asn379, Asn391, Asn403, and Asn415. Residue Asn439 is glycosylated (N-linked (GlcNAc...) asparagine). N-linked (GlcNAc...) asparagine glycans are attached at residues Asn463, Asn475, Asn487, Asn499, Asn511, and Asn523. N-linked (GlcNAc...) asparagine glycosylation is found at Asn547, Asn559, Asn571, Asn583, and Asn595. N-linked (GlcNAc...) asparagine glycosylation is present at Asn619. N-linked (GlcNAc...) asparagine glycosylation is found at Asn643, Asn655, Asn667, Asn679, Asn691, and Asn703. N-linked (GlcNAc...) asparagine glycans are attached at residues Asn727, Asn739, Asn751, Asn763, and Asn775. A glycan (N-linked (GlcNAc...) asparagine) is linked at Asn799. The N-linked (GlcNAc...) asparagine glycan is linked to Asn823. Residues 883–903 traverse the membrane as a helical segment; sequence LLLAGSTFLVLAVGLSAVLFL. The Cytoplasmic portion of the chain corresponds to 904-945; it reads GRERQNAVVICDNEVMMEEVPGCLSDASFAVPVTQSSDEARP.

Its subcellular location is the flagellar pocket. The protein localises to the cell membrane. Functionally, supposed to function as cell surface receptor. Possibly involved in receptor-mediated endocytosis. The sequence is that of Cysteine-rich, acidic integral membrane protein (CRAM) from Trypanosoma brucei brucei.